Consider the following 383-residue polypeptide: Probable indole-3-pyruvate monooxygenase YUCCA10 (383 aa).

Position 9-14 (9-14) interacts with FAD; the sequence is GAGPAG. 177 to 182 provides a ligand contact to NADP(+); the sequence is GGGNSG.

The protein belongs to the FMO family. The cofactor is FAD.

The catalysed reaction is indole-3-pyruvate + NADPH + O2 + H(+) = (indol-3-yl)acetate + CO2 + NADP(+) + H2O. The protein operates within plant hormone metabolism; auxin biosynthesis. Functionally, involved in auxin biosynthesis. The sequence is that of Probable indole-3-pyruvate monooxygenase YUCCA10 (YUC10) from Arabidopsis thaliana (Mouse-ear cress).